A 149-amino-acid chain; its full sequence is SsrA-binding protein (149 aa).

Residues 123 to 149 (KQFDKRETEKQRDWQREKARIMKGGKE) form a disordered region.

Belongs to the SmpB family.

It localises to the cytoplasm. Its function is as follows. Required for rescue of stalled ribosomes mediated by trans-translation. Binds to transfer-messenger RNA (tmRNA), required for stable association of tmRNA with ribosomes. tmRNA and SmpB together mimic tRNA shape, replacing the anticodon stem-loop with SmpB. tmRNA is encoded by the ssrA gene; the 2 termini fold to resemble tRNA(Ala) and it encodes a 'tag peptide', a short internal open reading frame. During trans-translation Ala-aminoacylated tmRNA acts like a tRNA, entering the A-site of stalled ribosomes, displacing the stalled mRNA. The ribosome then switches to translate the ORF on the tmRNA; the nascent peptide is terminated with the 'tag peptide' encoded by the tmRNA and targeted for degradation. The ribosome is freed to recommence translation, which seems to be the essential function of trans-translation. This Cupriavidus taiwanensis (strain DSM 17343 / BCRC 17206 / CCUG 44338 / CIP 107171 / LMG 19424 / R1) (Ralstonia taiwanensis (strain LMG 19424)) protein is SsrA-binding protein.